Here is a 196-residue protein sequence, read N- to C-terminus: Recombination protein RecR (196 aa).

A C4-type zinc finger spans residues 57–72 (CERCHTFTQADICATC). Residues 80–175 (SKLCVVETPA…RLTRLARGVP (96 aa)) form the Toprim domain.

Belongs to the RecR family.

Its function is as follows. May play a role in DNA repair. It seems to be involved in an RecBC-independent recombinational process of DNA repair. It may act with RecF and RecO. This is Recombination protein RecR from Albidiferax ferrireducens (strain ATCC BAA-621 / DSM 15236 / T118) (Rhodoferax ferrireducens).